Consider the following 71-residue polypeptide: Small ribosomal subunit protein bS21 (71 aa).

The protein belongs to the bacterial ribosomal protein bS21 family.

The protein is Small ribosomal subunit protein bS21 of Baumannia cicadellinicola subsp. Homalodisca coagulata.